We begin with the raw amino-acid sequence, 305 residues long: Non-homologous end joining protein Ku (305 aa).

Residues 16–202 (SLVSFGISLI…KVDPEQLSLA (187 aa)) form the Ku domain. The segment at 263–305 (GEENGRKKSVSGAQHRSRRKSKGEQKLKVVRSGSSSDKRRKSA) is disordered.

Belongs to the prokaryotic Ku family. In terms of assembly, homodimer. Interacts with LigD.

With LigD forms a non-homologous end joining (NHEJ) DNA repair enzyme, which repairs dsDNA breaks with reduced fidelity. Binds linear dsDNA with 5'- and 3'- overhangs but not closed circular dsDNA nor ssDNA. Recruits and stimulates the ligase activity of LigD. The polypeptide is Non-homologous end joining protein Ku (Acidobacterium capsulatum (strain ATCC 51196 / DSM 11244 / BCRC 80197 / JCM 7670 / NBRC 15755 / NCIMB 13165 / 161)).